The primary structure comprises 651 residues: Histone-lysine N-methyltransferase family member SUVH2 (651 aa).

Residues 1–28 (MSTLLPFPDLNLMPDSQSSTAGTTAGDT) form a disordered region. Over residues 15–28 (DSQSSTAGTTAGDT) the composition is skewed to low complexity. The region spanning 202–358 (DKHIVGPVTG…KFRLVRIEGQ (157 aa)) is the YDG domain. In terms of domain architecture, Pre-SET spans 434 to 492 (TGCECKLSCTDDCLCARKNGGEFAYDDNGHLLKGKHVVFECGEFCTCGPSCKSRVTQKG). Residues C436, C438, C442, C446, C448, C474, C478, C480, and C484 each coordinate Zn(2+). An SET domain is found at 495–638 (NRLEVFRSKE…PLAELSLDYG (144 aa)).

This sequence belongs to the class V-like SAM-binding methyltransferase superfamily. Histone-lysine methyltransferase family. Suvar3-9 subfamily. As to quaternary structure, self-interacts. Interacts with DNA-directed RNA polymerase V subunit NRPE1 and with DRD1 and DMS3. Binds to MORC1/CRT1. In terms of tissue distribution, expressed at low levels in leaves stems and flowers.

It localises to the nucleus. The protein localises to the chromosome. It is found in the centromere. Its function is as follows. Histone methyltransferase family member that plays a central role in gene silencing. Together with MORC6 and SUVH9, regulates the silencing of some transposable elements (TEs). According to PubMed:15775980, it is required for normal methylation of 'Lys-9' and 'Lys-27' of histone H3, 'Lys-20' of H4, and cytosine, but PubMed:19043555 see no significant effect on histone methylation when the gene is mutated. According to PubMed:19043555, the protein does not bind S-adenosyl-L-methionine and lacks methyltransferase activity. Instead, it may function downstream of DRM2 in RNA-directed DNA methylation, binding to methylated DNA and recruiting DNA-directed RNA polymerase V to chromatin. This Arabidopsis thaliana (Mouse-ear cress) protein is Histone-lysine N-methyltransferase family member SUVH2 (SUVH2).